The primary structure comprises 470 residues: MEESMDAKLKYKAKKIKMVFFDIDDTLRVKDTGYMPESIQRVFKALKAKGILVGIASGRARYGVPQEVQDLHADYCVKLNGAYVKDDAKTIIFQAPIPADVVVAYKKWADDMGIFYGMAGRHEAVLSARNDMISNAIDNVYAQLEVCPDYNEYHDVYQMWTFEDKGDGLQLPAELAEHLRLVRWHDNSSDVVLKGTSKALGVSKVVDHLGLKPENILVFGDELNDLELFDYAGISIAMGVSHPLLQEKADFITKKVEEDGILYALEELGLIDKELQFPQLDLENHTGPKVTIKTNHGDMTLVLFPDHAPKTVANFLGLAKEGYYDGIIFHRIIPEFMIQGGDPTGTGMGGQSIYGESFEDEFSDELYNLRGALSMANAGPNTNGSQFFIVQNSKIPYAKKELERGGWPTPIAAAYAENGGTPHLDRRHTVFGQLVDETSFQVLDLIAGVETGAQDKPKEDVIIETIEVFD.

Residue aspartate 22 is the Nucleophile of the active site. The Mg(2+) site is built by aspartate 22, aspartate 24, and aspartate 221. One can recognise a PPIase cyclophilin-type domain in the interval 286-468 (TGPKVTIKTN…EDVIIETIEV (183 aa)).

It in the C-terminal section; belongs to the cyclophilin-type PPIase family. PPIL1 subfamily. Requires Mg(2+) as cofactor.

It carries out the reaction [protein]-peptidylproline (omega=180) = [protein]-peptidylproline (omega=0). Functionally, PPIases accelerate the folding of proteins. It catalyzes the cis-trans isomerization of proline imidic peptide bonds in oligopeptides. This Streptococcus pyogenes serotype M6 (strain ATCC BAA-946 / MGAS10394) protein is Putative bifunctional phosphatase/peptidyl-prolyl cis-trans isomerase.